Consider the following 41-residue polypeptide: Large ribosomal subunit protein bL36 (41 aa).

Residues 1–21 (MKIRNSLKSLRGRHRDNQLVR) are disordered.

This sequence belongs to the bacterial ribosomal protein bL36 family.

The sequence is that of Large ribosomal subunit protein bL36 from Methylobacterium sp. (strain 4-46).